The sequence spans 311 residues: MPLRLIFMGTPDFSVPTLLELVAHGHEIVAVYTRAPKPGGRRGLQLQPTPVEEAARRLGVPVLTPKTLKTEEALEEFRAFDADAAVVVAYGMILPQAILDAPKLGCYNLHASLLPRWRGAAPINRAIMADDAESGVMVMKMDVGLDTGDVAMAERLAITDTMTAADLHDRLSRLGADLMVRAMAALDRGGLQLKKQSEDGVTYAAKIDKAEARIDWTKPARAVLRHIHGLSPFPGAWAELAGVSENARVKILRCELAKGSGAPGEVLDDQLTIACGEGAIRIIELQREGKARMQATDFLRGVPLKAGAKFT.

Residue 112–115 coordinates (6S)-5,6,7,8-tetrahydrofolate; that stretch reads SLLP.

The protein belongs to the Fmt family.

It catalyses the reaction L-methionyl-tRNA(fMet) + (6R)-10-formyltetrahydrofolate = N-formyl-L-methionyl-tRNA(fMet) + (6S)-5,6,7,8-tetrahydrofolate + H(+). In terms of biological role, attaches a formyl group to the free amino group of methionyl-tRNA(fMet). The formyl group appears to play a dual role in the initiator identity of N-formylmethionyl-tRNA by promoting its recognition by IF2 and preventing the misappropriation of this tRNA by the elongation apparatus. The protein is Methionyl-tRNA formyltransferase of Bradyrhizobium diazoefficiens (strain JCM 10833 / BCRC 13528 / IAM 13628 / NBRC 14792 / USDA 110).